A 143-amino-acid chain; its full sequence is Transcriptional regulator MraZ (143 aa).

SpoVT-AbrB domains follow at residues 5 to 47 (EYHH…PIEE) and 76 to 119 (AMES…SAER).

Belongs to the MraZ family. As to quaternary structure, forms oligomers.

It is found in the cytoplasm. The protein resides in the nucleoid. In Lactobacillus johnsonii (strain CNCM I-12250 / La1 / NCC 533), this protein is Transcriptional regulator MraZ.